The sequence spans 555 residues: O-fucosyltransferase 20 (555 aa).

The Cytoplasmic segment spans residues 1-58; it reads MALPKNGGNSSSTKKKVSYISVPSQIINSLSSSSLQSLLVSPKKSSRCTNRFSYRNPR. The helical; Signal-anchor for type II membrane protein transmembrane segment at 59–79 threads the bilayer; the sequence is IWFLTLFLVSLFGMLKLGLNV. Topologically, residues 80–555 are lumenal; the sequence is DPISLPFSRY…MCSDRRQQQQ (476 aa). A disordered region spans residues 110 to 130; that stretch reads KNDTQSSSSSEHRKNETLPTE. 2 N-linked (GlcNAc...) asparagine glycosylation sites follow: Asn-111 and Asn-124. Substrate is bound at residue 330–332; the sequence is HLR. 2 N-linked (GlcNAc...) asparagine glycosylation sites follow: Asn-371 and Asn-503. Residues 525–555 are disordered; sequence QPELRTGRGGKDVTKHPVSECMCSDRRQQQQ. Over residues 529 to 555 the composition is skewed to basic and acidic residues; that stretch reads RTGRGGKDVTKHPVSECMCSDRRQQQQ.

Belongs to the glycosyltransferase GT106 family. In terms of tissue distribution, highly expressed in embryogenic microspore and in vegetative tissues.

It is found in the golgi apparatus membrane. It functions in the pathway glycan metabolism. Its function is as follows. May play a role in the biosynthesis of matrix polysaccharides and contribute to the biomechanics and development of the plant cell wall. The protein is O-fucosyltransferase 20 of Brassica napus (Rape).